The sequence spans 1069 residues: Protocadherin-7 (1069 aa).

The signal sequence occupies residues 1-28 (MLRMRTAGWARGWCLGCCLLLPLSLSLA). 7 Cadherin domains span residues 29-143 (AAKQ…TPTF), 144-308 (PSPV…SPRF), 309-415 (EKSV…VPSI), 424-535 (PLKD…PPMF), 536-639 (GQSV…DPKF), 640-742 (MQDV…APTV), and 745-862 (PKNI…IPLT). At 29–879 (AAKQLLRYRL…SYEISKQRLS (851 aa)) the chain is on the extracellular side. A glycan (N-linked (GlcNAc...) asparagine) is linked at asparagine 79. The tract at residues 182-242 (LLQEPGGGGS…GGTNPGGRSS (61 aa)) is disordered. Gly residues predominate over residues 207 to 221 (PGGGGNGASGGGSGG). N-linked (GlcNAc...) asparagine glycosylation is found at asparagine 689, asparagine 747, asparagine 780, asparagine 822, asparagine 840, and asparagine 845. Residues 880–900 (IVIGVVAGIMTVILIILIVVM) traverse the membrane as a helical segment. The Cytoplasmic segment spans residues 901-1069 (ARYCRSKNKN…RLHPYITVFG (169 aa)). Positions 910-988 (NGYEAGKKDH…RYRSVNGGPG (79 aa)) are disordered. Over residues 930–944 (KSKKPKKDKKNKKSK) the composition is skewed to basic residues. Residues serine 989 and serine 1011 each carry the phosphoserine modification.

In terms of tissue distribution, expressed predominantly in brain and heart and at lower levels in various other tissues.

The protein localises to the cell membrane. The protein is Protocadherin-7 (PCDH7) of Homo sapiens (Human).